Here is a 419-residue protein sequence, read N- to C-terminus: Murein hydrolase activator EnvC (419 aa).

An N-terminal signal peptide occupies residues Met1–Ala34. 2 coiled-coil regions span residues Asp35–Ala124 and Leu155–Lys271. The span at Glu252–Arg270 shows a compositional bias: basic and acidic residues. Residues Glu252–Gly290 form a disordered region.

This sequence belongs to the peptidase M23B family.

It is found in the periplasm. Activator of the cell wall hydrolases AmiA and AmiB. Required for septal murein cleavage and daughter cell separation during cell division. In vitro, exhibits weak endoproteolytic activity on beta-casein. This Escherichia coli (strain K12) protein is Murein hydrolase activator EnvC (envC).